The following is a 114-amino-acid chain: Large ribosomal subunit protein bL17 (114 aa).

This sequence belongs to the bacterial ribosomal protein bL17 family. Part of the 50S ribosomal subunit. Contacts protein L32.

The polypeptide is Large ribosomal subunit protein bL17 (Halothermothrix orenii (strain H 168 / OCM 544 / DSM 9562)).